Here is a 270-residue protein sequence, read N- to C-terminus: Glutamate racemase (270 aa).

Residues 10–11 (DS) and 42–43 (YG) each bind substrate. Residue Cys-74 is the Proton donor/acceptor of the active site. Position 75–76 (75–76 (NT)) interacts with substrate. The Proton donor/acceptor role is filled by Cys-189. Substrate is bound at residue 190–191 (TH).

This sequence belongs to the aspartate/glutamate racemases family.

The enzyme catalyses L-glutamate = D-glutamate. It functions in the pathway cell wall biogenesis; peptidoglycan biosynthesis. Its function is as follows. Provides the (R)-glutamate required for cell wall biosynthesis. This is Glutamate racemase from Bartonella henselae (strain ATCC 49882 / DSM 28221 / CCUG 30454 / Houston 1) (Rochalimaea henselae).